A 392-amino-acid polypeptide reads, in one-letter code: Pannexin-3 (392 aa).

Over 1–39 the chain is Cytoplasmic; sequence MSLAHTAAEYMLSDALLPDRRGSRLKGLRLELPLDKMVK. Residues 40–60 traverse the membrane as a helical segment; sequence FITVGFPLLLMSLAFAQEFSS. The Extracellular segment spans residues 61–113; it reads GSPISCFSPSNFSVRQAAYVDSSCWDSLAHHTQDKAGQYKVKSLWPHKALPYS. N-linked (GlcNAc...) asparagine glycosylation occurs at Asn-71. The helical transmembrane segment at 114 to 134 threads the bilayer; the sequence is LLALAVAMYLPVLLWQYVAVP. The Cytoplasmic segment spans residues 135-215; that stretch reads SLSSDLLFII…VATYLLRNAL (81 aa). The chain crosses the membrane as a helical span at residues 216-236; sequence LLLFTSATYLYLGQFHLDVFF. At 237-267 the chain is on the extracellular side; it reads QDEFNCFIKTGLLHDETHVPELITCRLTSLS. Residues 268 to 288 form a helical membrane-spanning segment; that stretch reads VFQIVSVSSAAIYTILVPVII. The Cytoplasmic segment spans residues 289–392; it reads YNLTRLCRWD…LTQHTYDEHA (104 aa).

This sequence belongs to the pannexin family. In terms of assembly, homoheptameric. In terms of processing, N-glycosylation may play a role in cell surface targeting. As to expression, expressed in skin, cartilage, heart, lung, liver, spleen, thymus and kidney. Not expressed in brain. Expressed in calvarial cells.

The protein resides in the cell membrane. The protein localises to the endoplasmic reticulum membrane. It carries out the reaction Ca(2+)(in) = Ca(2+)(out). It catalyses the reaction ATP(in) = ATP(out). Functionally, regulator of osteoblast differentiation by functionning as a Ca(2+) channel in the endoplasmic reticulum which regulates calmodulin (CaM) pathways. Allows ATP release into the extracellular space and activation or purinergic receptors. This Mus musculus (Mouse) protein is Pannexin-3 (Panx3).